A 378-amino-acid chain; its full sequence is Mannitol-1-phosphate 5-dehydrogenase (378 aa).

4 to 15 serves as a coordination point for NAD(+); sequence SVHFGAGNIGRG.

It belongs to the mannitol dehydrogenase family.

The catalysed reaction is D-mannitol 1-phosphate + NAD(+) = beta-D-fructose 6-phosphate + NADH + H(+). In Streptococcus pneumoniae (strain JJA), this protein is Mannitol-1-phosphate 5-dehydrogenase.